A 1507-amino-acid polypeptide reads, in one-letter code: DDB1- and CUL4-associated factor 1 (1507 aa).

A protein kinase-like region spans residues 141–500 (QPLRTYSTGL…STLEILNLED (360 aa)). A phosphoserine mark is found at Ser202 and Ser255. The tract at residues 242–288 (HLDSGHKTSSRVNSTTKPEDGGLKKNKSAKQGDRENFRKAKQKLGFS) is disordered. The region spanning 562–593 (SYTHEQIVEMMEFLIEYGPAQLYWEPAEVFLK) is the Chromo domain. Residue Lys701 is modified to N6-acetyllysine. The residue at position 828 (Ser828) is a Phosphoserine. One can recognise a LisH domain in the interval 846-878 (PEKELLLLIRNHLISKGLGETATVLTKEADLPM). Thr888 carries the phosphothreonine modification. Phosphoserine is present on residues Ser895 and Ser898. The tract at residues 917–947 (AAVGASAPSAPTAHPQPRPPQGPLALPGPSY) is disordered. 2 positions are modified to phosphoserine: Ser979 and Ser1000. 5 WD repeats span residues 1091–1130 (EDES…EEAS), 1133–1174 (CHNS…DMKH), 1176–1213 (FTED…KLLT), 1215–1247 (FNPD…WDVR), and 1248–1290 (SAQA…LLHT). Positions 1091 to 1290 (EDESGFTCCA…DLRTFHLLHT (200 aa)) are WD repeat-like region. 2 short sequence motifs (DWD box) span residues 1242 to 1249 (VLWDVRSA) and 1278 to 1285 (EIWDLRTF). Ser1328 is subject to Phosphoserine. The tract at residues 1393-1507 (RLAEDEDEEE…EDDIILSLNE (115 aa)) is disordered. Acidic residues-rich tracts occupy residues 1396-1483 (EDED…EEVE) and 1490-1501 (DSSDNSDLEDDI). Residues 1418 to 1507 (DDDTDDLDEL…EDDIILSLNE (90 aa)) form an interaction with NF2 region.

Belongs to the VPRBP/DCAF1 family. In terms of assembly, component of the DCX (DDB1-CUL4-X-box) E3 ubiquitin-protein ligase complex, named CUL4A-RBX1-DDB1-DCAF1/VPRBP complex. Interacts with DDB1; the interaction is direct. Also forms a ternary complex with DDA1 and DDB1. Interacts with NF2 (via FERM domain). Component of the EDVP complex, a E3 ligase complex containing DYRK2, EDD/UBR5, DDB1 and DCAF1. Interacts with DYRK2; the interaction is direct. Interacts with RAG1; the interaction is direct. Interacts with LLGL1 and LLGL2. Interacts with histone H3. Interacts with ESR1 and LATS1; probably recruited by LATS1 to promote ESR1 ubiquitination and ubiquitin-mediated proteasomal degradation. Directly interacts with TET1, TET2 and TET3 (via C-terminus). Interacts with CEP78; promoting DCAF1 localization to centrosomes. As to quaternary structure, (Microbial infection) Interacts with HIV-1 virus Vpr protein; the interaction is direct. (Microbial infection) Interacts with HIV-2 virus Vpx protein; the interaction is direct and the complex recruits SAMHD1 to promote its ubiquitin-dependent proteasomal degradation. In terms of assembly, (Microbial infection) Interacts (via C-terminus) with human cytomegalovirus protein UL35; this interaction induces the accumulation of cells in the G2 phase of the cell cycle. Ubiquitously expressed.

It is found in the cytoplasm. It localises to the nucleus. Its subcellular location is the cytoskeleton. The protein resides in the microtubule organizing center. The protein localises to the centrosome. The enzyme catalyses L-seryl-[protein] + ATP = O-phospho-L-seryl-[protein] + ADP + H(+). It carries out the reaction L-threonyl-[protein] + ATP = O-phospho-L-threonyl-[protein] + ADP + H(+). The protein operates within protein modification; protein ubiquitination. Acts both as a substrate recognition component of E3 ubiquitin-protein ligase complexes and as an atypical serine/threonine-protein kinase, playing key roles in various processes such as cell cycle, telomerase regulation and histone modification. Probable substrate-specific adapter of a DCX (DDB1-CUL4-X-box) E3 ubiquitin-protein ligase complex, named CUL4A-RBX1-DDB1-DCAF1/VPRBP complex, which mediates ubiquitination and proteasome-dependent degradation of proteins such as NF2. Involved in the turnover of methylated proteins: recognizes and binds methylated proteins via its chromo domain, leading to ubiquitination of target proteins by the RBX1-DDB1-DCAF1/VPRBP complex. The CUL4A-RBX1-DDB1-DCAF1/VPRBP complex is also involved in B-cell development: DCAF1 is recruited by RAG1 to ubiquitinate proteins, leading to limit error-prone repair during V(D)J recombination. Also part of the EDVP complex, an E3 ligase complex that mediates ubiquitination of proteins such as TERT, leading to TERT degradation and telomerase inhibition. The EDVP complex also mediates ubiquitination and degradation of CCP110. Also acts as an atypical serine/threonine-protein kinase that specifically mediates phosphorylation of 'Thr-120' of histone H2A (H2AT120ph) in a nucleosomal context, thereby repressing transcription. H2AT120ph is present in the regulatory region of many tumor suppresor genes, down-regulates their transcription and is present at high level in a number of tumors. Involved in JNK-mediated apoptosis during cell competition process via its interaction with LLGL1 and LLGL2. By acting on TET dioxygenses, essential for oocyte maintenance at the primordial follicle stage, hence essential for female fertility. In terms of biological role, (Microbial infection) In case of infection by HIV-1 virus, it is recruited by HIV-1 Vpr in order to hijack the CUL4A-RBX1-DDB1-DCAF1/VPRBP function leading to arrest the cell cycle in G2 phase, and also to protect the viral protein from proteasomal degradation by another E3 ubiquitin ligase. The HIV-1 Vpr protein hijacks the CUL4A-RBX1-DDB1-DCAF1/VPRBP complex to promote ubiquitination and degradation of proteins such as TERT and ZIP/ZGPAT. Its function is as follows. (Microbial infection) In case of infection by HIV-2 virus, it is recruited by HIV-2 Vpx in order to hijack the CUL4A-RBX1-DDB1-DCAF1/VPRBP function leading to enhanced efficiency of macrophage infection and promotion of the replication of cognate primate lentiviruses in cells of monocyte/macrophage lineage. The chain is DDB1- and CUL4-associated factor 1 from Homo sapiens (Human).